A 369-amino-acid chain; its full sequence is tRNA 2-selenouridine synthase (369 aa).

The Rhodanese domain maps to 15 to 138 (FLNQHPMMDV…MRQYLIGVIE (124 aa)). Cys98 serves as the catalytic S-selanylcysteine intermediate.

The protein belongs to the SelU family. Monomer.

The enzyme catalyses 5-methylaminomethyl-2-thiouridine(34) in tRNA + selenophosphate + (2E)-geranyl diphosphate + H2O + H(+) = 5-methylaminomethyl-2-selenouridine(34) in tRNA + (2E)-thiogeraniol + phosphate + diphosphate. It carries out the reaction 5-methylaminomethyl-2-thiouridine(34) in tRNA + (2E)-geranyl diphosphate = 5-methylaminomethyl-S-(2E)-geranyl-thiouridine(34) in tRNA + diphosphate. It catalyses the reaction 5-methylaminomethyl-S-(2E)-geranyl-thiouridine(34) in tRNA + selenophosphate + H(+) = 5-methylaminomethyl-2-(Se-phospho)selenouridine(34) in tRNA + (2E)-thiogeraniol. The catalysed reaction is 5-methylaminomethyl-2-(Se-phospho)selenouridine(34) in tRNA + H2O = 5-methylaminomethyl-2-selenouridine(34) in tRNA + phosphate. Involved in the post-transcriptional modification of the uridine at the wobble position (U34) of tRNA(Lys), tRNA(Glu) and tRNA(Gln). Catalyzes the conversion of 2-thiouridine (S2U-RNA) to 2-selenouridine (Se2U-RNA). Acts in a two-step process involving geranylation of 2-thiouridine (S2U) to S-geranyl-2-thiouridine (geS2U) and subsequent selenation of the latter derivative to 2-selenouridine (Se2U) in the tRNA chain. The chain is tRNA 2-selenouridine synthase from Shewanella sp. (strain W3-18-1).